The primary structure comprises 45 residues: uncharacterized protein (45 aa).

Positions 18–45 are disordered; sequence RRGRIGVQPSPERRSEVVGPFPLARSLS.

This is an uncharacterized protein from Homo sapiens (Human).